The following is a 389-amino-acid chain: Brix domain-containing protein C1B9.03c (389 aa).

Positions 28–309 (SMVIRSGASE…LIKITEDAMG (282 aa)) constitute a Brix domain. Residues 323-350 (EEIKQQDNFHEQSRALKEKRKKEQDENV) show a composition bias toward basic and acidic residues. A disordered region spans residues 323–389 (EEIKQQDNFH…EGSSAYSDTE (67 aa)). Over residues 351–362 (RRKRENKKRRKD) the composition is skewed to basic residues. A Phosphoserine modification is found at Ser377. Residues 379-389 (NEGSSAYSDTE) show a composition bias toward polar residues.

The polypeptide is Brix domain-containing protein C1B9.03c (Schizosaccharomyces pombe (strain 972 / ATCC 24843) (Fission yeast)).